Reading from the N-terminus, the 311-residue chain is DNA repair and recombination protein RadA (311 aa).

104–111 (GEFGSGKS) contacts ATP.

It belongs to the eukaryotic RecA-like protein family.

Functionally, involved in DNA repair and in homologous recombination. Binds and assemble on single-stranded DNA to form a nucleoprotein filament. Hydrolyzes ATP in a ssDNA-dependent manner and promotes DNA strand exchange between homologous DNA molecules. The sequence is that of DNA repair and recombination protein RadA from Methanosphaera stadtmanae (strain ATCC 43021 / DSM 3091 / JCM 11832 / MCB-3).